The sequence spans 257 residues: tRNA dimethylallyltransferase (257 aa).

15–22 (GPTASGKS) contacts ATP. 17-22 (TASGKS) contributes to the substrate binding site.

The protein belongs to the IPP transferase family. As to quaternary structure, monomer. The cofactor is Mg(2+).

It catalyses the reaction adenosine(37) in tRNA + dimethylallyl diphosphate = N(6)-dimethylallyladenosine(37) in tRNA + diphosphate. Catalyzes the transfer of a dimethylallyl group onto the adenine at position 37 in tRNAs that read codons beginning with uridine, leading to the formation of N6-(dimethylallyl)adenosine (i(6)A). The polypeptide is tRNA dimethylallyltransferase (Oenococcus oeni (strain ATCC BAA-331 / PSU-1)).